Consider the following 159-residue polypeptide: Phosphopantetheine adenylyltransferase (159 aa).

Thr9 serves as a coordination point for substrate. ATP-binding positions include 9 to 10 (TF) and His17. 3 residues coordinate substrate: Lys41, Leu73, and Arg87. Residues 88-90 (GLR), Glu98, and 123-129 (YSYISST) each bind ATP.

Belongs to the bacterial CoaD family. As to quaternary structure, homohexamer. It depends on Mg(2+) as a cofactor.

Its subcellular location is the cytoplasm. The enzyme catalyses (R)-4'-phosphopantetheine + ATP + H(+) = 3'-dephospho-CoA + diphosphate. Its pathway is cofactor biosynthesis; coenzyme A biosynthesis; CoA from (R)-pantothenate: step 4/5. In terms of biological role, reversibly transfers an adenylyl group from ATP to 4'-phosphopantetheine, yielding dephospho-CoA (dPCoA) and pyrophosphate. This is Phosphopantetheine adenylyltransferase from Azotobacter vinelandii (strain DJ / ATCC BAA-1303).